Reading from the N-terminus, the 427-residue chain is 3-phosphoshikimate 1-carboxyvinyltransferase (427 aa).

Residues Lys22, Ser23, and Arg27 each contribute to the 3-phosphoshikimate site. Lys22 lines the phosphoenolpyruvate pocket. 2 residues coordinate phosphoenolpyruvate: Gly96 and Arg124. The 3-phosphoshikimate site is built by Ser169, Ser170, Gln171, Ser197, Asp313, Asn336, and Lys340. Gln171 contacts phosphoenolpyruvate. Asp313 functions as the Proton acceptor in the catalytic mechanism. The phosphoenolpyruvate site is built by Arg344, Arg386, and Lys411.

Belongs to the EPSP synthase family. In terms of assembly, monomer.

Its subcellular location is the cytoplasm. It catalyses the reaction 3-phosphoshikimate + phosphoenolpyruvate = 5-O-(1-carboxyvinyl)-3-phosphoshikimate + phosphate. Its pathway is metabolic intermediate biosynthesis; chorismate biosynthesis; chorismate from D-erythrose 4-phosphate and phosphoenolpyruvate: step 6/7. Catalyzes the transfer of the enolpyruvyl moiety of phosphoenolpyruvate (PEP) to the 5-hydroxyl of shikimate-3-phosphate (S3P) to produce enolpyruvyl shikimate-3-phosphate and inorganic phosphate. The protein is 3-phosphoshikimate 1-carboxyvinyltransferase of Salmonella newport (strain SL254).